Here is a 270-residue protein sequence, read N- to C-terminus: ATP synthase subunit a (270 aa).

5 consecutive transmembrane segments (helical) span residues 38–58, 98–118, 143–163, 208–228, and 239–259; these read VHID…GIFY, IAPL…MDLV, DVNI…YYSI, LFGN…MLPW, and AIFH…LTIV.

Belongs to the ATPase A chain family. As to quaternary structure, F-type ATPases have 2 components, CF(1) - the catalytic core - and CF(0) - the membrane proton channel. CF(1) has five subunits: alpha(3), beta(3), gamma(1), delta(1), epsilon(1). CF(0) has three main subunits: a(1), b(2) and c(9-12). The alpha and beta chains form an alternating ring which encloses part of the gamma chain. CF(1) is attached to CF(0) by a central stalk formed by the gamma and epsilon chains, while a peripheral stalk is formed by the delta and b chains.

The protein localises to the cell inner membrane. Key component of the proton channel; it plays a direct role in the translocation of protons across the membrane. In Vibrio parahaemolyticus serotype O3:K6 (strain RIMD 2210633), this protein is ATP synthase subunit a.